Consider the following 358-residue polypeptide: Mannonate dehydratase (358 aa).

The protein belongs to the mannonate dehydratase family. Fe(2+) serves as cofactor. The cofactor is Mn(2+).

It catalyses the reaction D-mannonate = 2-dehydro-3-deoxy-D-gluconate + H2O. It participates in carbohydrate metabolism; pentose and glucuronate interconversion. Its function is as follows. Catalyzes the dehydration of D-mannonate. In Shouchella clausii (strain KSM-K16) (Alkalihalobacillus clausii), this protein is Mannonate dehydratase.